A 399-amino-acid chain; its full sequence is S-adenosylmethionine synthase (399 aa).

Histidine 17 serves as a coordination point for ATP. Residue aspartate 19 coordinates Mg(2+). Residue glutamate 45 coordinates K(+). 2 residues coordinate L-methionine: glutamate 58 and glutamine 101. The interval 101-111 is flexible loop; the sequence is QSPDIAQGVDE. ATP contacts are provided by residues 177 to 179, 244 to 245, aspartate 253, 259 to 260, alanine 276, and lysine 280; these read DAK, RF, and RK. An L-methionine-binding site is contributed by aspartate 253. L-methionine is bound at residue lysine 284.

Belongs to the AdoMet synthase family. As to quaternary structure, homotetramer; dimer of dimers. Requires Mg(2+) as cofactor. K(+) is required as a cofactor.

Its subcellular location is the cytoplasm. The enzyme catalyses L-methionine + ATP + H2O = S-adenosyl-L-methionine + phosphate + diphosphate. It functions in the pathway amino-acid biosynthesis; S-adenosyl-L-methionine biosynthesis; S-adenosyl-L-methionine from L-methionine: step 1/1. Functionally, catalyzes the formation of S-adenosylmethionine (AdoMet) from methionine and ATP. The overall synthetic reaction is composed of two sequential steps, AdoMet formation and the subsequent tripolyphosphate hydrolysis which occurs prior to release of AdoMet from the enzyme. The chain is S-adenosylmethionine synthase from Listeria welshimeri serovar 6b (strain ATCC 35897 / DSM 20650 / CCUG 15529 / CIP 8149 / NCTC 11857 / SLCC 5334 / V8).